The chain runs to 441 residues: ATP-dependent protease ATPase subunit HslU (441 aa).

Residues V18, 60 to 65 (GVGKTE), D254, E319, and R391 contribute to the ATP site.

The protein belongs to the ClpX chaperone family. HslU subfamily. In terms of assembly, a double ring-shaped homohexamer of HslV is capped on each side by a ring-shaped HslU homohexamer. The assembly of the HslU/HslV complex is dependent on binding of ATP.

It is found in the cytoplasm. Functionally, ATPase subunit of a proteasome-like degradation complex; this subunit has chaperone activity. The binding of ATP and its subsequent hydrolysis by HslU are essential for unfolding of protein substrates subsequently hydrolyzed by HslV. HslU recognizes the N-terminal part of its protein substrates and unfolds these before they are guided to HslV for hydrolysis. This is ATP-dependent protease ATPase subunit HslU from Verminephrobacter eiseniae (strain EF01-2).